Reading from the N-terminus, the 487-residue chain is MKTIAILGKPNVGKSSLFNRLIKQHLAITSDVSGTTRDVKRACFDISGVEVELLDTGGIDKAEGLFAKVSANSLKAGQEADLVLYMVDGNVVPQDDDIAYFRTIQKAKKPLVLVINKVDNDKIKQQAWDFACFGAEQMYFISVHHNRGLSILLEAIFELLSLAKEQSLSNNLRSQMDNEEIDESLEEFLGILESTPNKSEENIAVGIIGRVNVGKSSLLNALLGKERSVVSEVAGTTIDPVDDEMDIEGKRVRFVDTAGIRRASKIWGIEKFALLRTNAALAQSHIVILVLDASESFVELDEKISSLIPKHALGVIVVLNKWDKKHKEYKEIIKEFKHRFPFLSFAPVMTLSALNGRNIDKLKKEILKVYQRFAYRIPTSALNDVIAQAVAHHHIPSDHGKIVKIYYATQYATHPPQIALVSNRPESLHFSYKRYIINMLREQFDFEGVPILLSVKGKNAKDEENTSAKKESPSKVSHRESKNRRFV.

EngA-type G domains lie at 2–164 (KTIA…SLAK) and 203–374 (IAVG…QRFA). Residues 8–15 (GKPNVGKS), 55–59 (DTGGI), 116–119 (NKVD), 209–216 (GRVNVGKS), 256–260 (DTAGI), and 320–323 (NKWD) each bind GTP. In terms of domain architecture, KH-like spans 375-459 (YRIPTSALND…PILLSVKGKN (85 aa)). Basic and acidic residues predominate over residues 459–480 (NAKDEENTSAKKESPSKVSHRE). The segment at 459–487 (NAKDEENTSAKKESPSKVSHRESKNRRFV) is disordered.

Belongs to the TRAFAC class TrmE-Era-EngA-EngB-Septin-like GTPase superfamily. EngA (Der) GTPase family. As to quaternary structure, associates with the 50S ribosomal subunit.

Functionally, GTPase that plays an essential role in the late steps of ribosome biogenesis. This is GTPase Der from Helicobacter hepaticus (strain ATCC 51449 / 3B1).